The primary structure comprises 249 residues: MRTPLIAGNWKMNGSSALVDAFGQAFADADLPESVEVVVHPPFPYLDAARRALAGGPVKLGAQTLNPLHAGARTGEVSGRMLKEFDVEYVLVGHSERRELYRESDDDVYDRLLAALNADLRPILCVGETLEARDAGRTRDVVLRQVGHALAPLEPAQRARVTIAYEPVWAIGTGRTATPEQAQEVMAAIREYQAGFDPALAQSMRLIYGGSMNAANAAELLAQPDIDGGLVGGASLKVDDFLAICHSAR.

9-11 contacts substrate; that stretch reads NWK. Histidine 94 (electrophile) is an active-site residue. The Proton acceptor role is filled by glutamate 166. Residues glycine 172, serine 211, and 232–233 contribute to the substrate site; that span reads GG.

This sequence belongs to the triosephosphate isomerase family. In terms of assembly, homodimer.

Its subcellular location is the cytoplasm. It carries out the reaction D-glyceraldehyde 3-phosphate = dihydroxyacetone phosphate. It functions in the pathway carbohydrate biosynthesis; gluconeogenesis. The protein operates within carbohydrate degradation; glycolysis; D-glyceraldehyde 3-phosphate from glycerone phosphate: step 1/1. Involved in the gluconeogenesis. Catalyzes stereospecifically the conversion of dihydroxyacetone phosphate (DHAP) to D-glyceraldehyde-3-phosphate (G3P). This Chromohalobacter salexigens (strain ATCC BAA-138 / DSM 3043 / CIP 106854 / NCIMB 13768 / 1H11) protein is Triosephosphate isomerase.